Here is a 508-residue protein sequence, read N- to C-terminus: Mevalonate kinase ERG12 (508 aa).

The disordered stretch occupies residues 1-46 (MPPSNPAMVNGLNGSHANGNGNGHNHISDSGSETSGESSNGSGRRR). A compositionally biased stretch (low complexity) spans 10-42 (NGLNGSHANGNGNGHNHISDSGSETSGESSNGS). ATP is bound by residues lysine 68, serine 200, and 205–211 (GAGLGSS). Residues serine 211 and glutamate 256 each coordinate Mg(2+). Aspartate 267 functions as the Proton acceptor in the catalytic mechanism.

This sequence belongs to the GHMP kinase family. Mevalonate kinase subfamily. As to quaternary structure, homodimer. Requires Mg(2+) as cofactor.

It localises to the cytoplasm. The protein resides in the cytosol. It catalyses the reaction (R)-mevalonate + ATP = (R)-5-phosphomevalonate + ADP + H(+). It participates in isoprenoid biosynthesis; isopentenyl diphosphate biosynthesis via mevalonate pathway; isopentenyl diphosphate from (R)-mevalonate: step 1/3. Mevalonate kinase; part of the second module of ergosterol biosynthesis pathway that includes the middle steps of the pathway. ERG12 converts mevalonate into 5-phosphomevalonate. The second module is carried out in the vacuole and involves the formation of farnesyl diphosphate, which is also an important intermediate in the biosynthesis of ubiquinone, dolichol, heme and prenylated proteins. Activity by the mevalonate kinase ERG12 (FG05912) first converts mevalonate into 5-phosphomevalonate. 5-phosphomevalonate is then further converted to 5-diphosphomevalonate by the phosphomevalonate kinase ERG8 (FG09764). The diphosphomevalonate decarboxylase ERG19 (FG10424) then produces isopentenyl diphosphate. The isopentenyl-diphosphate delta-isomerase IDI1 (FG09722) then catalyzes the 1,3-allylic rearrangement of the homoallylic substrate isopentenyl (IPP) to its highly electrophilic allylic isomer, dimethylallyl diphosphate (DMAPP). Finally the farnesyl diphosphate synthase ERG20 (FG06784) catalyzes the sequential condensation of isopentenyl pyrophosphate with dimethylallyl pyrophosphate, and then with the resultant geranylpyrophosphate to the ultimate product farnesyl pyrophosphate. The protein is Mevalonate kinase ERG12 of Gibberella zeae (strain ATCC MYA-4620 / CBS 123657 / FGSC 9075 / NRRL 31084 / PH-1) (Wheat head blight fungus).